Here is a 161-residue protein sequence, read N- to C-terminus: Urocortin-3 (161 aa).

Positions 1 to 21 (MLMPVHFLLLLLLLLGGPRTG) are cleaved as a signal peptide. Residues 22–118 (LPHKFYKAKP…QDTAKSPHRT (97 aa)) constitute a propeptide that is removed on maturation. Positions 64-118 (SRDASSGEEEEGKEKKTFPISGARGGARGTRYRYVSQAQPRGKPRQDTAKSPHRT) are disordered. The residue at position 157 (isoleucine 157) is an Isoleucine amide.

This sequence belongs to the sauvagine/corticotropin-releasing factor/urotensin I family. In terms of assembly, binds with high affinity to CRF receptors 2-alpha and 2-beta.

Its subcellular location is the secreted. Functionally, suppresses food intake, delays gastric emptying and decreases heat-induced edema. Might represent an endogenous ligand for maintaining homeostasis after stress. The polypeptide is Urocortin-3 (UCN3) (Homo sapiens (Human)).